A 210-amino-acid polypeptide reads, in one-letter code: Large ribosomal subunit protein bL9 (210 aa).

Residues 172-210 (EAAAAALEPDSEEEFEAATPPSELAAEASDEDADDAKEA) are disordered. Acidic residues predominate over residues 199 to 210 (ASDEDADDAKEA).

This sequence belongs to the bacterial ribosomal protein bL9 family.

Binds to the 23S rRNA. This chain is Large ribosomal subunit protein bL9, found in Sphingopyxis alaskensis (strain DSM 13593 / LMG 18877 / RB2256) (Sphingomonas alaskensis).